The sequence spans 162 residues: 2-C-methyl-D-erythritol 2,4-cyclodiphosphate synthase (162 aa).

Positions 8 and 10 each coordinate a divalent metal cation. 4-CDP-2-C-methyl-D-erythritol 2-phosphate-binding positions include 8–10 (DVH) and 36–37 (HS). His44 is a binding site for a divalent metal cation. 4-CDP-2-C-methyl-D-erythritol 2-phosphate-binding positions include 58-60 (DIG), 63-67 (FPDTD), 102-108 (AQAPKMA), 134-137 (TTTE), Phe141, and Arg144.

It belongs to the IspF family. Homotrimer. A divalent metal cation is required as a cofactor.

The enzyme catalyses 4-CDP-2-C-methyl-D-erythritol 2-phosphate = 2-C-methyl-D-erythritol 2,4-cyclic diphosphate + CMP. Its pathway is isoprenoid biosynthesis; isopentenyl diphosphate biosynthesis via DXP pathway; isopentenyl diphosphate from 1-deoxy-D-xylulose 5-phosphate: step 4/6. In terms of biological role, involved in the biosynthesis of isopentenyl diphosphate (IPP) and dimethylallyl diphosphate (DMAPP), two major building blocks of isoprenoid compounds. Catalyzes the conversion of 4-diphosphocytidyl-2-C-methyl-D-erythritol 2-phosphate (CDP-ME2P) to 2-C-methyl-D-erythritol 2,4-cyclodiphosphate (ME-CPP) with a corresponding release of cytidine 5-monophosphate (CMP). This Yersinia pseudotuberculosis serotype O:1b (strain IP 31758) protein is 2-C-methyl-D-erythritol 2,4-cyclodiphosphate synthase.